The following is a 188-amino-acid chain: CASP-like protein 4B1 (188 aa).

A disordered region spans residues 1 to 34 (MTNPDNMKPVEATDVESAAEKTSEPTPASGTSTI). Residues 1–46 (MTNPDNMKPVEATDVESAAEKTSEPTPASGTSTITQRWKREDLIKK) lie on the Cytoplasmic side of the membrane. Residues 24–34 (EPTPASGTSTI) are compositionally biased toward polar residues. The helical transmembrane segment at 47–67 (ASPITRGICLLFSLIAFLIMV) threads the bilayer. The Extracellular segment spans residues 68 to 84 (SNKHGYGRNFNDYEEYR). Residues 85 to 105 (YVLAISIISTLYTAWQTFAHF) traverse the membrane as a helical segment. The Cytoplasmic segment spans residues 106–124 (SKREIFDRRTSILVDFSGD). A helical membrane pass occupies residues 125–145 (QIVAYLLISAASSAIPLTNIF). At 146 to 156 (REGQDNIFTDS) the chain is on the extracellular side. The helical transmembrane segment at 157–177 (AASAISMAIFAFIALALSALF) threads the bilayer. Residues 178–188 (SGYKLSTHSFI) are Cytoplasmic-facing.

This sequence belongs to the Casparian strip membrane proteins (CASP) family. In terms of assembly, homodimer and heterodimers.

The protein resides in the cell membrane. The polypeptide is CASP-like protein 4B1 (Arabidopsis thaliana (Mouse-ear cress)).